The chain runs to 218 residues: ATP phosphoribosyltransferase (218 aa).

It belongs to the ATP phosphoribosyltransferase family. Short subfamily. Heteromultimer composed of HisG and HisZ subunits.

It is found in the cytoplasm. The enzyme catalyses 1-(5-phospho-beta-D-ribosyl)-ATP + diphosphate = 5-phospho-alpha-D-ribose 1-diphosphate + ATP. It participates in amino-acid biosynthesis; L-histidine biosynthesis; L-histidine from 5-phospho-alpha-D-ribose 1-diphosphate: step 1/9. Catalyzes the condensation of ATP and 5-phosphoribose 1-diphosphate to form N'-(5'-phosphoribosyl)-ATP (PR-ATP). Has a crucial role in the pathway because the rate of histidine biosynthesis seems to be controlled primarily by regulation of HisG enzymatic activity. In Lactiplantibacillus plantarum (strain ATCC BAA-793 / NCIMB 8826 / WCFS1) (Lactobacillus plantarum), this protein is ATP phosphoribosyltransferase.